The sequence spans 205 residues: Protein-L-isoaspartate O-methyltransferase (205 aa).

Ser56 is a catalytic residue.

This sequence belongs to the methyltransferase superfamily. L-isoaspartyl/D-aspartyl protein methyltransferase family.

The protein resides in the cytoplasm. The enzyme catalyses [protein]-L-isoaspartate + S-adenosyl-L-methionine = [protein]-L-isoaspartate alpha-methyl ester + S-adenosyl-L-homocysteine. Its function is as follows. Catalyzes the methyl esterification of L-isoaspartyl residues in peptides and proteins that result from spontaneous decomposition of normal L-aspartyl and L-asparaginyl residues. It plays a role in the repair and/or degradation of damaged proteins. This is Protein-L-isoaspartate O-methyltransferase from Aeromonas salmonicida (strain A449).